The primary structure comprises 329 residues: Tyrosine--tRNA ligase (329 aa).

L-tyrosine-binding residues include Tyr31, Tyr157, Gln161, Asp164, and Gln179. The 'KMSKS' region signature appears at 220–224 (KMSKS). Position 223 (Lys223) interacts with ATP.

Belongs to the class-I aminoacyl-tRNA synthetase family. TyrS type 4 subfamily. Homodimer.

Its subcellular location is the cytoplasm. It carries out the reaction tRNA(Tyr) + L-tyrosine + ATP = L-tyrosyl-tRNA(Tyr) + AMP + diphosphate + H(+). Functionally, catalyzes the attachment of tyrosine to tRNA(Tyr) in a two-step reaction: tyrosine is first activated by ATP to form Tyr-AMP and then transferred to the acceptor end of tRNA(Tyr). The polypeptide is Tyrosine--tRNA ligase (Picrophilus torridus (strain ATCC 700027 / DSM 9790 / JCM 10055 / NBRC 100828 / KAW 2/3)).